The chain runs to 72 residues: Translation initiation factor IF-1 (72 aa).

An S1-like domain is found at 1–72; sequence MSKDDVIEMQ…SRGRITWRAK (72 aa).

This sequence belongs to the IF-1 family. As to quaternary structure, component of the 30S ribosomal translation pre-initiation complex which assembles on the 30S ribosome in the order IF-2 and IF-3, IF-1 and N-formylmethionyl-tRNA(fMet); mRNA recruitment can occur at any time during PIC assembly.

Its subcellular location is the cytoplasm. Its function is as follows. One of the essential components for the initiation of protein synthesis. Stabilizes the binding of IF-2 and IF-3 on the 30S subunit to which N-formylmethionyl-tRNA(fMet) subsequently binds. Helps modulate mRNA selection, yielding the 30S pre-initiation complex (PIC). Upon addition of the 50S ribosomal subunit IF-1, IF-2 and IF-3 are released leaving the mature 70S translation initiation complex. The chain is Translation initiation factor IF-1 from Clostridium novyi (strain NT).